Here is a 366-residue protein sequence, read N- to C-terminus: MKRNYKIAVLPGDGIGPEIMREGYKILRILKSKLSLNIMTQEFDVGGVAIDKYGVALPKKTLQGCRDSHAILFGSIGGPKWEDLPSHLQPERGALLPLRKYFNLFSNLRLARIYSGLEKLSPLKSRISNLGCDILCVRELTGGIYFGDPKGSKVSKSLNCAFDTEVYYQFEIERIAHMAFDLALTRRCKVTSIDKANVLESSMFWRKIVNRISTQYSQVKLSHLYVDNAAMQIIKNPSQFDVLLCSNLFGDILSDECAAITGSIGLLPSASLNDKNFGLYEPAGGSAPDIKGKNIANPIALILSIGMMMRYSFKLYDVADLIDWAVNKTLKLGYRTQDISENNKFINTSSMGDIIAEILANRIHKI.

Residue 78-91 coordinates NAD(+); sequence GPKWEDLPSHLQPE. Arg99, Arg109, Arg138, and Asp227 together coordinate substrate. Asp227, Asp251, and Asp255 together coordinate Mg(2+). Position 285 to 297 (285 to 297) interacts with NAD(+); the sequence is GSAPDIKGKNIAN.

This sequence belongs to the isocitrate and isopropylmalate dehydrogenases family. LeuB type 1 subfamily. As to quaternary structure, homodimer. Mg(2+) serves as cofactor. Requires Mn(2+) as cofactor.

It localises to the cytoplasm. It catalyses the reaction (2R,3S)-3-isopropylmalate + NAD(+) = 4-methyl-2-oxopentanoate + CO2 + NADH. It functions in the pathway amino-acid biosynthesis; L-leucine biosynthesis; L-leucine from 3-methyl-2-oxobutanoate: step 3/4. Functionally, catalyzes the oxidation of 3-carboxy-2-hydroxy-4-methylpentanoate (3-isopropylmalate) to 3-carboxy-4-methyl-2-oxopentanoate. The product decarboxylates to 4-methyl-2 oxopentanoate. The chain is 3-isopropylmalate dehydrogenase from Buchnera aphidicola subsp. Baizongia pistaciae (strain Bp).